The primary structure comprises 63 residues: Lysis protein (63 aa).

The helical transmembrane segment at 21–43 (LYVWIALAIVLSDFTSIFSHWIW) threads the bilayer.

Belongs to the Leviviricetes lysis protein family.

The protein localises to the host cell inner membrane. It localises to the host cell outer membrane. Induces the formation of specific membrane adhesion sites between the inner and outer membranes, apparently leading to host cell lysis. Lysis may be performed via activation of host murein hydrolases. The polypeptide is Lysis protein (Escherichia coli (Bacteriophage JP34)).